Consider the following 473-residue polypeptide: MDSVSKDMINVLPDALLCHILSFLTTKEAASTSLLSRRWRYLLAFVPNLEFDDSVYLHRDKRVKNTLHEKGFVGFVLLVNNKRKKLSTSFPDFVDRILALQGNSPLDKFSLKMVDGHDPVDPDSVVPWIHKVLVRGVSDLHLVVDMNEWTSDPLPSRIFLSETLVKLTIKIRDGPFIDVKHVHLPKLKTLYLQSVMFDENDIGFRKLLSGCPVLEELVLDGMGSCVWTSFTVSVATLKRLTFCCQKMSSFGYMHDDENPNNVSFDTPNLVYLEYAQVIANNYPKVNFDLLVEAKIDIWMTVDQIREVRLRKNEVNCMVGNATDFIVGLRNVRVLYLSPETLEVLTYCCKQIPIFENLSHLTIKSDPNVGWKPLTKLLKNSPKLETLVFQGLLHRDNKEDVAISSSSVKVLKIFLSGDKLKKQIEKVKHFLKTMPRLEQLVFYYDVKVLSQLHMLSRLASPKCKIHLIPSRESV.

The 49-residue stretch at 6–54 (KDMINVLPDALLCHILSFLTTKEAASTSLLSRRWRYLLAFVPNLEFDDS) folds into the F-box domain. LRR repeat units follow at residues 168 to 194 (TIKI…YLQS), 196 to 221 (MFDE…VLDG), 229 to 254 (SFTV…GYMH), 333 to 364 (VLYL…TIKS), and 365 to 390 (DPNV…VFQG).

The chain is Putative F-box/LRR-repeat protein At3g59170 from Arabidopsis thaliana (Mouse-ear cress).